A 340-amino-acid chain; its full sequence is Ketol-acid reductoisomerase (NADP(+)) (340 aa).

Residues 1-183 (MAITVYYDKD…GGGRTGIIET (183 aa)) form the KARI N-terminal Rossmann domain. NADP(+) is bound by residues 26 to 29 (FGSQ), Arg49, Ser52, Ser54, and 84 to 87 (DEIQ). Residue His109 is part of the active site. Position 135 (Gly135) interacts with NADP(+). In terms of domain architecture, KARI C-terminal knotted spans 184-329 (TFKAETETDL…RNLRAMMPWI (146 aa)). Asp192, Glu196, Glu228, and Glu232 together coordinate Mg(2+). Ser253 is a binding site for substrate.

This sequence belongs to the ketol-acid reductoisomerase family. Mg(2+) is required as a cofactor.

It catalyses the reaction (2R)-2,3-dihydroxy-3-methylbutanoate + NADP(+) = (2S)-2-acetolactate + NADPH + H(+). The enzyme catalyses (2R,3R)-2,3-dihydroxy-3-methylpentanoate + NADP(+) = (S)-2-ethyl-2-hydroxy-3-oxobutanoate + NADPH + H(+). It functions in the pathway amino-acid biosynthesis; L-isoleucine biosynthesis; L-isoleucine from 2-oxobutanoate: step 2/4. The protein operates within amino-acid biosynthesis; L-valine biosynthesis; L-valine from pyruvate: step 2/4. In terms of biological role, involved in the biosynthesis of branched-chain amino acids (BCAA). Catalyzes an alkyl-migration followed by a ketol-acid reduction of (S)-2-acetolactate (S2AL) to yield (R)-2,3-dihydroxy-isovalerate. In the isomerase reaction, S2AL is rearranged via a Mg-dependent methyl migration to produce 3-hydroxy-3-methyl-2-ketobutyrate (HMKB). In the reductase reaction, this 2-ketoacid undergoes a metal-dependent reduction by NADPH to yield (R)-2,3-dihydroxy-isovalerate. This Campylobacter jejuni subsp. doylei (strain ATCC BAA-1458 / RM4099 / 269.97) protein is Ketol-acid reductoisomerase (NADP(+)).